A 377-amino-acid polypeptide reads, in one-letter code: Leukocyte elastase inhibitor (377 aa).

At methionine 1 the chain carries N-acetylmethionine.

It belongs to the serpin family. Ov-serpin subfamily.

Its subcellular location is the cytoplasm. In terms of biological role, regulates the activity of the neutrophil proteases. In Xenopus laevis (African clawed frog), this protein is Leukocyte elastase inhibitor (serpinb1).